A 111-amino-acid polypeptide reads, in one-letter code: Large ribosomal subunit protein uL24 (111 aa).

The protein belongs to the universal ribosomal protein uL24 family. As to quaternary structure, part of the 50S ribosomal subunit.

Functionally, one of two assembly initiator proteins, it binds directly to the 5'-end of the 23S rRNA, where it nucleates assembly of the 50S subunit. One of the proteins that surrounds the polypeptide exit tunnel on the outside of the subunit. The protein is Large ribosomal subunit protein uL24 of Bifidobacterium longum (strain DJO10A).